The primary structure comprises 54 residues: Toxin AnmTx Cj 1c-1 (54 aa).

An N-terminal signal peptide occupies residues 1–7 (MLNKRGV). Intrachain disulfides connect cysteine 9–cysteine 50, cysteine 11–cysteine 41, and cysteine 33–cysteine 51. Glutamate 53 is subject to Glutamic acid 1-amide.

Belongs to the sea anemone sodium channel inhibitory toxin family. Type I subfamily. Post-translationally, contains 3 disulfide bonds.

The protein resides in the secreted. It is found in the nematocyst. Functionally, in vivo, induces marked paralysis on shrimps (C.multidentata) at 10-20 seconds after injection and a weak toxicity when injected into insect larvae (M.domestica). This is Toxin AnmTx Cj 1c-1 from Epiactis japonica (Sea anemone).